A 93-amino-acid chain; its full sequence is MQIDDALLQRLEKLSMLEIKDEHKESVKGHLAEILGFVENIFALETSALKTDTELCTPLREDEPKSQPNTAKEILSQNKHSQDHYFVVPKIIE.

The protein belongs to the GatC family. In terms of assembly, heterotrimer of A, B and C subunits.

The catalysed reaction is L-glutamyl-tRNA(Gln) + L-glutamine + ATP + H2O = L-glutaminyl-tRNA(Gln) + L-glutamate + ADP + phosphate + H(+). The enzyme catalyses L-aspartyl-tRNA(Asn) + L-glutamine + ATP + H2O = L-asparaginyl-tRNA(Asn) + L-glutamate + ADP + phosphate + 2 H(+). Its function is as follows. Allows the formation of correctly charged Asn-tRNA(Asn) or Gln-tRNA(Gln) through the transamidation of misacylated Asp-tRNA(Asn) or Glu-tRNA(Gln) in organisms which lack either or both of asparaginyl-tRNA or glutaminyl-tRNA synthetases. The reaction takes place in the presence of glutamine and ATP through an activated phospho-Asp-tRNA(Asn) or phospho-Glu-tRNA(Gln). The protein is Aspartyl/glutamyl-tRNA(Asn/Gln) amidotransferase subunit C of Helicobacter pylori (strain HPAG1).